A 519-amino-acid chain; its full sequence is Ribonuclease Y (519 aa).

The helical transmembrane segment at 3–23 (LLSLLLILLGIILGVVVGYIV) threads the bilayer. A KH domain is found at 209-269 (TVSVVNLPND…IRREIARTAL (61 aa)). Residues 335 to 428 (VLKHSIEVAH…VAAADALSAA (94 aa)) enclose the HD domain.

It belongs to the RNase Y family.

The protein localises to the cell membrane. In terms of biological role, endoribonuclease that initiates mRNA decay. The protein is Ribonuclease Y of Staphylococcus epidermidis (strain ATCC 35984 / DSM 28319 / BCRC 17069 / CCUG 31568 / BM 3577 / RP62A).